The sequence spans 209 residues: Large ribosomal subunit protein uL3 (209 aa).

Residues 141–163 form a disordered region; the sequence is RAVGSMGASSDPSRTFKNKRMPG.

The protein belongs to the universal ribosomal protein uL3 family. Part of the 50S ribosomal subunit. Forms a cluster with proteins L14 and L19.

Its function is as follows. One of the primary rRNA binding proteins, it binds directly near the 3'-end of the 23S rRNA, where it nucleates assembly of the 50S subunit. The polypeptide is Large ribosomal subunit protein uL3 (Clostridium botulinum (strain ATCC 19397 / Type A)).